Consider the following 454-residue polypeptide: Neuronal acetylcholine receptor subunit alpha-5 (454 aa).

Residues M1–P26 are disordered. The first 29 residues, M1 to V29, serve as a signal peptide directing secretion. The span at P10–G22 shows a compositional bias: low complexity. Residues A30 to T240 are Extracellular-facing. N-linked (GlcNAc...) asparagine glycosylation is found at N55, N169, and N215. A disulfide bridge links C156 with C170. An intrachain disulfide couples C220 to C221. Transmembrane regions (helical) follow at residues L241–P261, L270–P290, and L303–I323. Topologically, residues H324 to M416 are cytoplasmic. Residues F417 to I437 traverse the membrane as a helical segment. At H438–T454 the chain is on the extracellular side.

Belongs to the ligand-gated ion channel (TC 1.A.9) family. Acetylcholine receptor (TC 1.A.9.1) subfamily. Alpha-5/CHRNA5 sub-subfamily. In terms of assembly, neuronal AChR that forms heteropentamers composed of two different type of subunits: alpha and non-alpha (beta). CHRNA5/alpha-5 subunit is only able to form functional nAChRs when co-assembled with another alpha subunit, can be combined to CHRNA4/alpha-4 or CHRNA3/alpha-3 and CHRNB4/beta-4 or CHRNB2/beta-2 to give rise to functional receptors. Interacts with LYPD6.

The protein resides in the synaptic cell membrane. It localises to the cell membrane. It catalyses the reaction Ca(2+)(in) = Ca(2+)(out). It carries out the reaction K(+)(in) = K(+)(out). The catalysed reaction is Na(+)(in) = Na(+)(out). With respect to regulation, activated by a myriad of ligands such as acetylcholine, cytisine, nicotine, choline and epibatidine. Its function is as follows. Component of neuronal acetylcholine receptors (nAChRs) that function as pentameric, ligand-gated cation channels with high calcium permeability among other activities. nAChRs are excitatory neurotrasnmitter receptors formed by a collection of nAChR subunits known to mediate synaptic transmission in the nervous system and the neuromuscular junction. Each nAchR subunit confers differential attributes to channel properties, including activation, deactivation and desensitization kinetics, pH sensitivity, cation permeability, and binding to allosteric modulators. Has an accessory rather than functional role and is only able to form functional nAChRs when co-assembled with another beta subunit. Participates in pentameric assemblies along with CHRNA3, CHRNA4, CHRNB2 and CHRNB4. Increases receptor sensitivity to acetylcholine and nicotine when associated with CHRNA4 and CHRNB2. Plays a role in nicotine addiction. This chain is Neuronal acetylcholine receptor subunit alpha-5 (CHRNA5), found in Gallus gallus (Chicken).